Reading from the N-terminus, the 369-residue chain is Bi-functional coumaroyl CoA and feruloyl CoA ortho-hydroxylase Diox1 (369 aa).

One can recognise a Fe2OG dioxygenase domain in the interval 209-319; sequence IREPMLVGSR…RISVPLFVNP (111 aa). Residue Tyr225 coordinates 2-oxoglutarate. 3 residues coordinate Fe cation: His240, Asp242, and His300. The 2-oxoglutarate site is built by Arg310 and Ser312.

It belongs to the iron/ascorbate-dependent oxidoreductase family. L-ascorbate serves as cofactor. It depends on Fe(2+) as a cofactor.

The catalysed reaction is (E)-4-coumaroyl-CoA + 2-oxoglutarate + O2 = (E)-2,4-dihydroxycinnamoyl-CoA + succinate + CO2. The enzyme catalyses (E)-feruloyl-CoA + 2-oxoglutarate + O2 = (E)-6-hydroxyferuloyl-CoA + succinate + CO2. The protein operates within phenylpropanoid metabolism. In terms of biological role, 2-oxoglutarate (OG)- and Fe(II)-dependent dioxygenase (2OGD) involved in scopoletin and umbelliferone biosynthesis. Converts feruloyl CoA into 6'-hydroxyferuloyl CoA, and p-coumaroyl CoA into 2,4-dihydroxycinnamoyl-CoA. This is Bi-functional coumaroyl CoA and feruloyl CoA ortho-hydroxylase Diox1 from Ruta graveolens (Common rue).